A 187-amino-acid chain; its full sequence is Flavin-dependent monooxygenase, reductase subunit HsaB (187 aa).

Residues 32–36 (PVGFA), 38–39 (QS), 53–55 (CPT), 59–60 (RS), and 85–86 (RF) each bind FAD. Position 152–155 (152–155 (FYRG)) interacts with NAD(+).

The protein belongs to the non-flavoprotein flavin reductase family. In terms of assembly, hsaAB monooxygenase consists of an oxygenase component HsaA and a reductase component HsaB.

The enzyme catalyses a reduced flavin + NAD(+) = an oxidized flavin + NADH + 2 H(+). Its pathway is lipid metabolism; steroid biosynthesis. Its function is as follows. Catalyzes the reduction of free flavins (FMN or FAD) by NADH. Subsequently, the reduced flavins diffuse to the HsaA oxygenase subunit. The protein is Flavin-dependent monooxygenase, reductase subunit HsaB (hsaB) of Mycobacterium tuberculosis (strain CDC 1551 / Oshkosh).